Consider the following 646-residue polypeptide: Vitamin K-dependent protein S (646 aa).

Positions Gly1–Arg12 are excised as a propeptide. The Gla domain occupies Ala13–Gly58. 4-carboxyglutamate occurs at positions 18, 19, 26, 28, 31, 32, 37, 38, 41, 44, and 48. Cys29 and Cys34 are oxidised to a cystine. A thrombin-sensitive region spans residues Cys59–Ala87. Positions Ile88 to Glu126 constitute an EGF-like 1 domain. Disulfide bonds link Cys92–Cys105, Cys97–Cys114, Cys116–Cys125, Cys132–Cys146, Cys142–Cys155, Cys157–Cys170, Cys176–Cys188, Cys183–Cys197, Cys199–Cys212, Cys218–Cys227, Cys223–Cys236, Cys238–Cys253, and Cys420–Cys446. (3R)-3-hydroxyaspartate is present on Asp107. The EGF-like 2; calcium-binding domain maps to Asp128 to Lys171. The EGF-like 3; calcium-binding domain maps to Asp172–Glu213. In terms of domain architecture, EGF-like 4; calcium-binding spans Asp214–Glu254. 2 Laminin G-like domains span residues Leu270–Cys446 and Tyr455–Cys636. 2 N-linked (GlcNAc...) asparagine glycosylation sites follow: Asn470 and Asn480. Cys609 and Cys636 are disulfide-bonded.

In terms of assembly, interacts with C4b-binding protein, a regulator of the complex system. In rabbit plasma however, protein S appears to be present only in free form. Post-translationally, the iron and 2-oxoglutarate dependent 3-hydroxylation of aspartate and asparagine is (R) stereospecific within EGF domains. Plasma.

The protein localises to the secreted. Anticoagulant plasma protein; it is a cofactor to activated protein C in the degradation of coagulation factors Va and VIIIa. It helps to prevent coagulation and stimulating fibrinolysis. In Oryctolagus cuniculus (Rabbit), this protein is Vitamin K-dependent protein S (PROS1).